The primary structure comprises 472 residues: MADYWKDVLPVDPYVVKSRSMLQDIDRQIITQLYQPLIGPVAFSLYMTLWGELEQNRLWGGESTHRQLMGMTQSNLKTIHQEQGKLEGIGLLKVYMKESERQERLFIYELLPPLRPNEFFEDGMLNVFLYNRVGKTKYQQLKQFFTHPAISEDAKDITRPFNHAFESLQPSEWKLTSDMEETVRLAEGSEYTSVGQSPSYTITEDVFDFDLFLAGLSETMIPRKAMTQQVRDTIKKLSYLYGIDPLQMQNVVMSAIDERDVITTEALRKAASDWYQIERNGQLPDLVEKTQPVHLREGEQPAEEDSLDGKLIALLEAISPKKLLQDIADGTEPSKADLKIIEEIMFEQKLEPGVTNVLIYYVMLKTDMKLSKNYIQKIASHWARKKVKTVREAMKLAIEENRQYLEWAEGKTKSSKRNQKVIREEKLPDWMTEKETASDSESGQQKLHPQDLEEQKKKMMEEMQKLKKYSAY.

A DDBH1 region spans residues M1–P112. The segment at D210 to A302 is DDBH2-1. A DDBH2-2 region spans residues E303–K411. The interval S415–Y472 is disordered. Basic and acidic residues-rich tracts occupy residues V421–A437 and H448–K465.

Belongs to the DnaB/DnaD family. Homotetramer. Also forms higher-order oligomers, can be induced by some ssDNA. The DNA replisome assembles sequentially on oriC in this order; DnaA, DnaD, DnaB, DnaI-DnaC helicase. In atomic force microscopy forms a square with a small central hole. Part of the replication restart primosome which assembles in this order; PriA, DnaD then DnaB. The preferred DNA substrate mimics an arrested DNA replication fork with unreplicated lagging strand. Interacts with DnaC, but probably not as a tetramer. Interacts with DnaD but no interaction with PriA was seen. Interacts with cell cycle regulator CcrZ. In terms of processing, in early growth phase only full-length protein is detected, during late growth and stationary phase full-length and C-terminally truncated proteins are seen (at protein level). Truncated protein is only seen in cytoplasmic fractions.

It localises to the cytoplasm. The protein resides in the cell membrane. Helps DnaI load the DnaC replicative helicase onto single-stranded (ss)DNA. During DNA replication from the origin of replication (oriC) in the DNA replisome, DnaD is required after DnaA, before DnaB and before subsequent helicase DnaC loading. Component of the replication restart primosome, which reloads the replicative helicase on sites other than oriC. DnaB, DnaD and DnaI may also be required for a PriA-independent pathway of replication fork restart. DnaB and DnaD work together to allow DnaB access to ssDNA. DNA replication at oriC might originate on the inner face of the cell membrane; DnaB is essential for both replication initiation and cell membrane attachment of the origin region of the chromosome and plasmids. Weakly binds ssDNA, preferentially binds double-stranded (ds)DNA, and replication fork-like substrates. Remodels DNA, laterally compacts supercoiled plasmid and linear DNA, forms beads along the dsDNA. Together DnaB and DnaD form bipolar complexes on plasmid DNA. DnaB and DnaD are also required to load helicase on the repN plasmid origin of replication (oriN). In Bacillus subtilis (strain 168), this protein is Replicative helicase loading/DNA remodeling protein DnaB.